We begin with the raw amino-acid sequence, 537 residues long: Chaperonin GroEL (537 aa).

ATP-binding positions include 31-34, 87-91, glycine 415, and aspartate 495; these read TLGP and DGTTT.

It belongs to the chaperonin (HSP60) family. Forms a cylinder of 14 subunits composed of two heptameric rings stacked back-to-back. Interacts with the co-chaperonin GroES.

The protein localises to the cytoplasm. The enzyme catalyses ATP + H2O + a folded polypeptide = ADP + phosphate + an unfolded polypeptide.. Together with its co-chaperonin GroES, plays an essential role in assisting protein folding. The GroEL-GroES system forms a nano-cage that allows encapsulation of the non-native substrate proteins and provides a physical environment optimized to promote and accelerate protein folding. This is Chaperonin GroEL from Methanoregula boonei (strain DSM 21154 / JCM 14090 / 6A8).